The chain runs to 1681 residues: Sodium channel protein type 7 subunit alpha (1681 aa).

Residues 1–118 (MLTSPEPKGL…RRAAIKALVH (118 aa)) are Cytoplasmic-facing. One copy of the I repeat lies at 101–402 (TLSPLNSLRR…ILTMTYEKEK (302 aa)). A helical transmembrane segment spans residues 119-138 (PLFRLLILISVLTDSILMCM). Topologically, residues 139–142 (SNLP) are extracellular. The helical transmembrane segment at 143-168 (EWILAIENTLLGIYAFEILVKVIARG) threads the bilayer. Over 169–179 (IWAGSFSFLGD) the chain is Cytoplasmic. The helical transmembrane segment at 180–197 (LWNWLDFSVTLFELITRF) threads the bilayer. Topologically, residues 198–201 (SPLS) are extracellular. Residues 202–220 (SFLMLKTIRTFRILKIIPL) form a helical membrane-spanning segment. Topologically, residues 221–238 (NHGLQSIVMTLAQCLKKL) are cytoplasmic. The helical transmembrane segment at 239–260 (FGAIALALFFLAVFSLLGMGLF) threads the bilayer. The Extracellular segment spans residues 261–339 (MGNLKHKCLR…PDNGFTSFDN (79 aa)). A disulfide bridge links Cys-268 with Cys-308. Asn-277, Asn-282, Asn-288, and Asn-310 each carry an N-linked (GlcNAc...) asparagine glycan. The segment at residues 340–367 (FGWSLLAMFRLMTQDYPELLYHQILYAS) is an intramembrane region (pore-forming). Gly-368 is a topological domain (extracellular). A helical transmembrane segment spans residues 369-408 (KVYMIFFVMISFWFAFYLTSLFLGILTMTYEKEKQRACEE). Residues 409 to 506 (SGGLDPKCQQ…EFADRVITHP (98 aa)) lie on the Cytoplasmic side of the membrane. The stretch at 488-757 (CSPCWVKLNE…QLAMARIKSG (270 aa)) is one II repeat. Residues 507–522 (LADLFLVICIVLNICF) form a helical membrane-spanning segment. The Extracellular portion of the chain corresponds to 523–531 (LALEHFPMS). Residues 532–560 (EELRSLLHVGNLVFIGIYTIEMILKIIAM) traverse the membrane as a helical segment. The Cytoplasmic segment spans residues 561-569 (HPYGYFQIS). Residues 570 to 587 (WNIFDSILVVLELTEILL) form a helical membrane-spanning segment. Residues 588 to 593 (ADVEGL) lie on the Extracellular side of the membrane. A helical transmembrane segment spans residues 594–609 (AVLITVPLIFIKLGKY). Over 610–626 (GPPFKSLMRILGSSLMA) the chain is Cytoplasmic. A helical transmembrane segment spans residues 627–655 (LKDLVLLLCIFVYFSAVFGMKLFGRSYKD). The Extracellular portion of the chain corresponds to 656-673 (CVCHIKEDCQPQRWHMSD). 2 disulfides stabilise this stretch: Cys-658–Cys-664 and Cys-696–Cys-705. The segment at residues 674-700 (FLHAYMTVFRILCGEWIETLWECMEVA) is an intramembrane region (pore-forming). Residue Gly-701 is a topological domain, extracellular. A helical transmembrane segment spans residues 702–732 (QAWCIPFYMMVILIGNLLILYLFVTLVSSFS). The Cytoplasmic portion of the chain corresponds to 733-934 (YYDATSEVNK…KTCCKIVENS (202 aa)). The span at 806 to 834 (YKDQSSSTEKTPVTESESQSLIASPSASE) shows a compositional bias: polar residues. Residues 806–875 (YKDQSSSTEK…MKQSSSSECS (70 aa)) are disordered. A Phosphoserine modification is found at Ser-843. Residues 916–1224 (NGKIWKNIRK…KKQYRALKKL (309 aa)) form an III repeat. Residues 935–953 (WFECFIGLVTLLCTGTLAL) form a helical membrane-spanning segment. At 954 to 961 (EDIYIDQR) the chain is on the extracellular side. A helical transmembrane segment spans residues 962–990 (KTTKILLEYADMIFAYIFILEMLLKWVAY). Residues 991-998 (GFKAFFSN) are Cytoplasmic-facing. A helical membrane pass occupies residues 999 to 1020 (NWYKLDFMVVIVFCLSLIGKTR). Residue Glu-1021 is a topological domain, extracellular. Residues 1022–1040 (DLNPLTSIKFLRALRVLSQ) form a helical membrane-spanning segment. Residues 1041-1055 (FERMKVVLRALIKTT) are Cytoplasmic-facing. Residues 1056–1080 (LPTVSVFLVCLMIWLLFSVIGVQLF) traverse the membrane as a helical segment. Topologically, residues 1081-1127 (AGKFYECIDPTKGERFPVFEVMNKSQCEKLLFNESMPWENAKLNFDN) are extracellular. Cys-1087 and Cys-1107 are joined by a disulfide. Asn-1103 and Asn-1113 each carry an N-linked (GlcNAc...) asparagine glycan. The segment at residues 1128–1154 (VGNGFLSLLQVATFNGWISIMNSAIDS) is an intramembrane region (pore-forming). Topologically, residues 1155-1167 (VGVNMQPSFEYNL) are extracellular. The chain crosses the membrane as a helical span at residues 1168–1202 (YMYSYFIIFVIFGLFLPLCMLIGVIIRNFNKQKIK). Residues 1203 to 1250 (QGGSNIFITVKQKKQYRALKKLLYADVQKPTPRPRNKFQGFLFDLVTH) are Cytoplasmic-facing. An IV repeat occupies 1233-1531 (TPRPRNKFQG…WNRFDPDRTQ (299 aa)). A helical membrane pass occupies residues 1251-1272 (RVFNVIIILLICFQATTIMIQK). Residues 1273–1276 (DEQS) lie on the Extracellular side of the membrane. A helical membrane pass occupies residues 1277-1305 (PQMETAIFWMNSIFVMLFTLECILKLTAF). Residues 1306-1312 (RCHYFTS) are Cytoplasmic-facing. Residues 1313–1338 (AWNVHDFMVVIFSITGLLLPLTIGQY) form a helical membrane-spanning segment. Over 1339 to 1341 (FVP) the chain is Extracellular. A helical transmembrane segment spans residues 1342–1362 (PSLVQLILLSRVIHILRPGKG). The Cytoplasmic portion of the chain corresponds to 1363 to 1377 (PKVFHDLMLPLILAL). A helical membrane pass occupies residues 1378-1402 (PALLNISLLIFLVMFIYAIFGMYNF). The Extracellular segment spans residues 1403–1420 (AYVKKEAGINDVSNFETF). The segment at residues 1421 to 1444 (GSSMLCLFQVTTFSGWDGMLDAIF) is an intramembrane region (pore-forming). Residues 1445-1468 (NSQWSDCDPDKINPGTQVKGDCGS) lie on the Extracellular side of the membrane. Residues Cys-1451 and Cys-1466 are joined by a disulfide bond. The helical transmembrane segment at 1469-1504 (PSVGISYFVSYILISWLIIVNMYIVLIMEFLSIPSQ) threads the bilayer. At 1505-1681 (KKSRTLSEDD…EEKASIQTQI (177 aa)) the chain is on the cytoplasmic side. Positions 1647–1662 (NVSDTPAIDDRRDDLT) are enriched in basic and acidic residues. Residues 1647–1681 (NVSDTPAIDDRRDDLTSKGAHSGKIEEKASIQTQI) form a disordered region.

It belongs to the sodium channel (TC 1.A.1.10) family. SCN7A subfamily. In terms of assembly, the sodium channel formed by SCN7A is probably a heterooligomeric complex consisting of the ion conducting pore forming alpha subunit SCN7A and regulatory beta subunits such as SCN3B. Interacts with ATP1A1; activates ATP1A1 and thereby indirectly signals to nearby neurons to regulate sodium homeostasis. In terms of tissue distribution, not tissue specific but widely expressed. Expressed in regions of the central nervous system that control body fluid ionic balance.

The protein resides in the cell membrane. It catalyses the reaction Na(+)(in) = Na(+)(out). Sodium leak channel functioning as an osmosensor regulating sodium ion levels in various tissues and organs. While most sodium channels are voltage-gated, SCN7A is not and lets sodium flow through membrane along its concentration gradient. In glial cells of the central nervous system, senses body-fluid sodium levels and controls salt intake behavior as well as voluntary water intake through activation of nearby neurons to maintain appropriate sodium levels in the body. By mediating sodium influx into keratinocytes, also plays a role in skin barrier homeostasis. This chain is Sodium channel protein type 7 subunit alpha, found in Mus musculus (Mouse).